A 565-amino-acid chain; its full sequence is Oxygen-dependent choline dehydrogenase (565 aa).

7-36 provides a ligand contact to FAD; it reads DYIICGAGSAGNVLATRLTEDPDVTVLLLE. Histidine 474 (proton acceptor) is an active-site residue.

This sequence belongs to the GMC oxidoreductase family. FAD is required as a cofactor.

It catalyses the reaction choline + A = betaine aldehyde + AH2. The enzyme catalyses betaine aldehyde + NAD(+) + H2O = glycine betaine + NADH + 2 H(+). Its pathway is amine and polyamine biosynthesis; betaine biosynthesis via choline pathway; betaine aldehyde from choline (cytochrome c reductase route): step 1/1. Its function is as follows. Involved in the biosynthesis of the osmoprotectant glycine betaine. Catalyzes the oxidation of choline to betaine aldehyde and betaine aldehyde to glycine betaine at the same rate. The sequence is that of Oxygen-dependent choline dehydrogenase from Burkholderia thailandensis (strain ATCC 700388 / DSM 13276 / CCUG 48851 / CIP 106301 / E264).